Here is a 2177-residue protein sequence, read N- to C-terminus: Protein sidekick-2 (2177 aa).

The first 26 residues, 1–26, serve as a signal peptide directing secretion; the sequence is MKGLGVPAAALLWGGLSALLPPSLPA. Topologically, residues 27 to 1937 are extracellular; sequence DDVSPYFKTE…ANPFYEEWWF (1911 aa). Ig-like C2-type domains follow at residues 31–113, 118–205, 220–299, 313–401, 407–496, and 501–590; these read PYFK…TEVQ, GSFE…QPIT, PTII…SSVP, PQFV…TYLA, PNIT…ADLV, and TRIT…AHLR. Residues C53 and C96 are joined by a disulfide bond. Residues N198 and N228 are each glycosylated (N-linked (GlcNAc...) asparagine). 2 cysteine pairs are disulfide-bonded: C242–C289 and C335–C385. N408 carries an N-linked (GlcNAc...) asparagine glycan. Intrachain disulfides connect C428–C480 and C522–C574. 7 N-linked (GlcNAc...) asparagine glycosylation sites follow: N582, N614, N709, N748, N809, N941, and N953. Fibronectin type-III domains lie at 597-693, 698-794, 799-898, 902-996, 1000-1099, 1104-1202, 1207-1304, 1305-1402, 1407-1504, 1509-1626, 1631-1727, 1731-1826, and 1829-1928; these read APES…LPEE, PPQN…TLQG, PPGN…THED, PVGH…VPPE, APTN…TLQA, APAN…TRES, GPSN…TLDD, VPGP…TEKR, PPSK…TLQA, APTI…VGEA, APQN…TQQA, APGS…TGPG, and APGP…AQKA. N1107, N1210, N1261, N1346, N1462, N1580, N1593, N1675, N1694, N1746, and N1820 each carry an N-linked (GlcNAc...) asparagine glycan. A helical membrane pass occupies residues 1938-1958; it reads LVVIALVGLIFILLLVFVLII. Residues 1959 to 2177 lie on the Cytoplasmic side of the membrane; it reads RGQSKKYAKK…APIGGFSSFV (219 aa). Disordered regions lie at residues 2044–2071 and 2103–2177; these read AESS…VDPA and QAYS…SSFV. 2 stretches are compositionally biased toward polar residues: residues 2045 to 2063 and 2119 to 2130; these read ESSS…QGSD and PLSNSTSTQQGS. Pro residues predominate over residues 2142–2151; it reads PQTPGNPPSQ. A PDZ-binding motif is present at residues 2171–2177; it reads GGFSSFV.

Belongs to the sidekick family. In terms of assembly, homodimer; mediates homophilic interactions to promote cell adhesion. In terms of tissue distribution, expressed by non-overlapping subsets of retinal neurons. SDK1, SDK2, DSCAM and DSCAML1 are expressed in non-overlapping subsets of interneurons and retinal ganglion cells (RGCs) that form synapses in distinct inner plexiform layer (IPL) sublaminae.

It localises to the cell membrane. It is found in the synapse. Functionally, adhesion molecule that promotes lamina-specific synaptic connections in the retina. Expressed in specific subsets of interneurons and retinal ganglion cells (RGCs) and promotes synaptic connectivity via homophilic interactions. This Gallus gallus (Chicken) protein is Protein sidekick-2.